We begin with the raw amino-acid sequence, 395 residues long: Putative 8-amino-7-oxononanoate synthase (395 aa).

Arg23 serves as a coordination point for substrate. 110-111 serves as a coordination point for pyridoxal 5'-phosphate; that stretch reads GY. A substrate-binding site is contributed by His135. Pyridoxal 5'-phosphate contacts are provided by residues Ser182, 207 to 210, and 239 to 242; these read DEAH and TFSK. Residue Lys242 is modified to N6-(pyridoxal phosphate)lysine. Thr356 lines the substrate pocket.

It belongs to the class-II pyridoxal-phosphate-dependent aminotransferase family. BioF subfamily. As to quaternary structure, homodimer. Pyridoxal 5'-phosphate serves as cofactor.

It catalyses the reaction 6-carboxyhexanoyl-[ACP] + L-alanine + H(+) = (8S)-8-amino-7-oxononanoate + holo-[ACP] + CO2. The protein operates within cofactor biosynthesis; biotin biosynthesis. Functionally, catalyzes the decarboxylative condensation of pimeloyl-[acyl-carrier protein] and L-alanine to produce 8-amino-7-oxononanoate (AON), [acyl-carrier protein], and carbon dioxide. The polypeptide is Putative 8-amino-7-oxononanoate synthase (bioF) (Bacillus mycoides (strain KBAB4) (Bacillus weihenstephanensis)).